The chain runs to 506 residues: Putative transporter SVOPL (506 aa).

10 helical membrane-spanning segments follow: residues 57-77, 104-124, 133-153, 190-210, 220-240, 297-317, 362-382, 397-417, 444-464, and 472-492; these read SIGF…ANIV, ALVS…CGYI, VVFG…FSTS, LLPL…VLGM, WMIR…MFIP, TSLL…GSVL, LISC…LNIV, FFFM…LLFL, IGMG…PFIA, and VILA…GVFF.

The protein belongs to the major facilitator superfamily.

It localises to the membrane. The sequence is that of Putative transporter SVOPL (svopl) from Danio rerio (Zebrafish).